We begin with the raw amino-acid sequence, 347 residues long: FK506-binding protein-like (347 aa).

The segment at 1–36 is disordered; that stretch reads METSLISPMKENNTAQPQQREENTQQNLNAAVPIKQ. Phosphothreonine is present on threonine 3. 3 TPR repeats span residues 208-241, 250-283, and 284-317; these read AKEE…LLTL, TILH…EPGH, and LKAL…DPKN.

As to quaternary structure, forms a ternary complex with CDKN1A/p21 and HSP90AB1/Hsp90.

Its function is as follows. May be involved in response to X-ray. Regulates p21 protein stability by binding to Hsp90 and p21. The polypeptide is FK506-binding protein-like (Fkbpl) (Rattus norvegicus (Rat)).